A 120-amino-acid polypeptide reads, in one-letter code: Large ribosomal subunit protein bL19 (120 aa).

This sequence belongs to the bacterial ribosomal protein bL19 family.

Its function is as follows. This protein is located at the 30S-50S ribosomal subunit interface and may play a role in the structure and function of the aminoacyl-tRNA binding site. In Gloeothece citriformis (strain PCC 7424) (Cyanothece sp. (strain PCC 7424)), this protein is Large ribosomal subunit protein bL19.